Here is a 140-residue protein sequence, read N- to C-terminus: uncharacterized protein (140 aa).

The C2H2-type zinc finger occupies 21–42 (CPYCNYTNADVKAIKKHIKSKH).

To M.jannaschii MJECL27.

This is an uncharacterized protein from Methanocaldococcus jannaschii (strain ATCC 43067 / DSM 2661 / JAL-1 / JCM 10045 / NBRC 100440) (Methanococcus jannaschii).